Here is a 189-residue protein sequence, read N- to C-terminus: PTS system glucose-specific EIIA component (189 aa).

The region spanning 31-135 (DEAFAEKIVG…SVITPVVIAN (105 aa)) is the PTS EIIA type-1 domain. Zn(2+)-binding residues include H68 and H83. H83 (tele-phosphohistidine intermediate; for EIIA activity) is an active-site residue. Phosphohistidine; by HPr is present on H83.

As to quaternary structure, heterodimer with glycerol kinase (glpk). Zn(2+) serves as cofactor.

It localises to the cytoplasm. Functionally, the phosphoenolpyruvate-dependent sugar phosphotransferase system (sugar PTS), a major carbohydrate active transport system, catalyzes the phosphorylation of incoming sugar substrates concomitantly with their translocation across the cell membrane. The enzyme II complex composed of PtsG and Crr is involved in glucose transport. In Borreliella burgdorferi (strain ATCC 35210 / DSM 4680 / CIP 102532 / B31) (Borrelia burgdorferi), this protein is PTS system glucose-specific EIIA component (crr).